We begin with the raw amino-acid sequence, 201 residues long: Recombination protein RecR (201 aa).

The C4-type zinc finger occupies 60–75; that stretch reads CSECGNMDVSDPCTVC. The region spanning 83-178 is the Toprim domain; it reads AAICVVETVG…SITSLARGVP (96 aa).

It belongs to the RecR family.

Functionally, may play a role in DNA repair. It seems to be involved in an RecBC-independent recombinational process of DNA repair. It may act with RecF and RecO. The chain is Recombination protein RecR from Maricaulis maris (strain MCS10) (Caulobacter maris).